Consider the following 99-residue polypeptide: Progonadoliberin-1 (99 aa).

Positions 1–26 (MAAQTFALRLLLVGTLLGTLLGQGCC) are cleaved as a signal peptide. At Gln-27 the chain carries Pyrrolidone carboxylic acid. Gly-36 is modified (glycine amide).

Belongs to the GnRH family.

Its subcellular location is the secreted. Stimulates the secretion of gonadotropins. The chain is Progonadoliberin-1 (gnrh1) from Dicentrarchus labrax (European seabass).